The sequence spans 237 residues: Fibroblast growth factor 3 (237 aa).

The signal sequence occupies residues 1–21 (MVIIWILLLSFISCGPQVSWA). The N-linked (GlcNAc...) asparagine glycan is linked to N83.

It belongs to the heparin-binding growth factors family.

Functionally, plays an important role in the regulation of embryonic development, cell proliferation, and cell differentiation. The polypeptide is Fibroblast growth factor 3 (fgf3) (Xenopus laevis (African clawed frog)).